The primary structure comprises 149 residues: Nucleoside diphosphate kinase (149 aa).

The ATP site is built by Lys9, Phe57, Arg85, Thr91, Arg102, and Asn112. His115 acts as the Pros-phosphohistidine intermediate in catalysis.

This sequence belongs to the NDK family. As to quaternary structure, homotetramer. Mg(2+) is required as a cofactor.

It localises to the cytoplasm. It catalyses the reaction a 2'-deoxyribonucleoside 5'-diphosphate + ATP = a 2'-deoxyribonucleoside 5'-triphosphate + ADP. The catalysed reaction is a ribonucleoside 5'-diphosphate + ATP = a ribonucleoside 5'-triphosphate + ADP. Functionally, major role in the synthesis of nucleoside triphosphates other than ATP. The ATP gamma phosphate is transferred to the NDP beta phosphate via a ping-pong mechanism, using a phosphorylated active-site intermediate. This Staphylococcus epidermidis (strain ATCC 35984 / DSM 28319 / BCRC 17069 / CCUG 31568 / BM 3577 / RP62A) protein is Nucleoside diphosphate kinase.